Here is a 65-residue protein sequence, read N- to C-terminus: Small ribosomal subunit protein eS17 (65 aa).

It belongs to the eukaryotic ribosomal protein eS17 family.

The protein is Small ribosomal subunit protein eS17 of Methanocella arvoryzae (strain DSM 22066 / NBRC 105507 / MRE50).